Reading from the N-terminus, the 203-residue chain is SCO2-like protein RT0576 (203 aa).

Residues 42 to 203 enclose the Thioredoxin domain; sequence KDNIKIGEAF…KEIMEFLRNE (162 aa). 3 residues coordinate Cu cation: Cys-80, Cys-84, and His-170.

The protein belongs to the SCO1/2 family.

The polypeptide is SCO2-like protein RT0576 (Rickettsia typhi (strain ATCC VR-144 / Wilmington)).